The following is a 212-amino-acid chain: Adenylate kinase (212 aa).

10 to 15 provides a ligand contact to ATP; it reads GAGKGT. The interval 30–59 is NMP; that stretch reads STGDMFRAAMANQTEMGVLAKSYIDKGELV. Residues threonine 31, arginine 36, 57 to 59, 86 to 89, and glutamine 93 contribute to the AMP site; these read ELV and GYPR. Residues 127-159 form an LID region; the sequence is GRIIHRVTGETFHKVFNPPVDYKEEDYYQREDD. ATP is bound by residues arginine 128 and 137 to 138; that span reads TF. AMP-binding residues include arginine 156 and arginine 167. Glutamine 195 contributes to the ATP binding site.

Belongs to the adenylate kinase family. In terms of assembly, monomer.

The protein resides in the cytoplasm. The enzyme catalyses AMP + ATP = 2 ADP. It functions in the pathway purine metabolism; AMP biosynthesis via salvage pathway; AMP from ADP: step 1/1. In terms of biological role, catalyzes the reversible transfer of the terminal phosphate group between ATP and AMP. Plays an important role in cellular energy homeostasis and in adenine nucleotide metabolism. The protein is Adenylate kinase of Streptococcus pneumoniae (strain JJA).